The following is a 376-amino-acid chain: Actin-like protein 53D (376 aa).

Positions 1 to 40 are necessary and sufficient for recruitment to the fusome and actin cones of spermatocyte cysts; it reads MSSEVDSNSHHAAVVIDNGSGVCKAGFSPEDTPRAVFPSI.

The protein belongs to the actin family. ARP1 subfamily. As to expression, high expression in males whereas expression in females is very low. In adult males, highest levels of expression are in the testis. In adult females, expressed only in the ovaries at very low levels. In larvae, highly expressed in the imaginal disk whereas in prepupae and pupae modest levels of expression occur in the fat body.

The protein resides in the cytoplasm. Its subcellular location is the cytoskeleton. Required for optimal embryo development, particularly under heat stress conditions. Also appears to have a role in negatively regulating spermatocyte cyst development. Under heat stress conditions, required for the correct organization and migration of nuclei during early embryogenesis, and therefore possibly functions by regulating embryonic actin networks during the heat stress response. This Drosophila melanogaster (Fruit fly) protein is Actin-like protein 53D.